We begin with the raw amino-acid sequence, 109 residues long: Meiotically up-regulated gene 153 protein (109 aa).

The protein localises to the mitochondrion. Functionally, has a role in meiosis. The sequence is that of Meiotically up-regulated gene 153 protein (mug153) from Schizosaccharomyces pombe (strain 972 / ATCC 24843) (Fission yeast).